The chain runs to 531 residues: Na(+)/H(+) antiporter NhaB (531 aa).

12 helical membrane-spanning segments follow: residues 13-33 (FLGK…IINP), 34-54 (LVFF…EFIF), 90-110 (LVAN…IYFM), 121-141 (ILIG…TAAF), 145-165 (FLDA…FYAI), 206-226 (LLMH…VGEP), 242-262 (FIIR…LTCV), 308-328 (VIAV…GLIG), 352-372 (EEAL…AVII), 394-414 (LALF…VFVG), 456-476 (GQAA…QLSY), and 482-502 (MALP…SFLL).

The protein belongs to the NhaB Na(+)/H(+) (TC 2.A.34) antiporter family.

The protein localises to the cell inner membrane. It carries out the reaction 2 Na(+)(in) + 3 H(+)(out) = 2 Na(+)(out) + 3 H(+)(in). Na(+)/H(+) antiporter that extrudes sodium in exchange for external protons. The sequence is that of Na(+)/H(+) antiporter NhaB from Aliivibrio salmonicida (strain LFI1238) (Vibrio salmonicida (strain LFI1238)).